The following is a 1165-amino-acid chain: Immunoglobulin superfamily member 3 (1165 aa).

The first 20 residues, 1–20 (MGTAAGLLLAALLLAGTSWA), serve as a signal peptide directing secretion. The Extracellular portion of the chain corresponds to 21–1095 (QREVNIQQGP…LQSTICANDA (1075 aa)). Ig-like C2-type domains are found at residues 22–139 (REVN…AKMN), 144–262 (PDTL…WFPL), 276–386 (PTDK…RGPS), 406–527 (PLRT…WQLL), 545–661 (FAVT…WTQL), 678–800 (PRLQ…EEAS), 810–934 (PDAN…WYKR), and 951–1067 (PALQ…WYLL). 2 disulfide bridges follow: Cys43–Cys121 and Cys168–Cys246. The EWI motif signature appears at 250–252 (EWI). Cystine bridges form between Cys302–Cys376, Cys432–Cys511, Cys566–Cys645, Cys701–Cys779, Cys835–Cys918, and Cys974–Cys1051. A helical membrane pass occupies residues 1096–1116 (LFYLVFFYPFPIFGILIITIL). Residues 1117 to 1165 (LVRFRHRPTSKPGEGKNGVPLLWIKEPHLNYSPTCLEPPVLSIHPGTID) are Cytoplasmic-facing.

The protein resides in the membrane. The protein is Immunoglobulin superfamily member 3 (igsf3) of Xenopus laevis (African clawed frog).